Consider the following 307-residue polypeptide: Olfactory receptor 12D2 (307 aa).

The Extracellular portion of the chain corresponds to Met-1–Pro-23. Residue Asn-3 is glycosylated (N-linked (GlcNAc...) asparagine). A helical transmembrane segment spans residues Phe-24–Leu-44. The Cytoplasmic segment spans residues Met-45–Arg-52. A helical transmembrane segment spans residues Leu-53–Thr-73. The Extracellular portion of the chain corresponds to Val-74–Ser-97. A disulfide bridge links Cys-95 with Cys-187. A helical membrane pass occupies residues Gln-98 to Phe-118. Topologically, residues Asp-119–Gln-137 are cytoplasmic. A helical transmembrane segment spans residues Leu-138–Ser-158. Residues Val-159–Trp-195 lie on the Extracellular side of the membrane. A helical transmembrane segment spans residues Leu-196–Ser-215. Topologically, residues Tyr-216–Ala-236 are cytoplasmic. Residues Leu-237–Thr-257 form a helical membrane-spanning segment. The Extracellular segment spans residues Tyr-258–Asp-270. The helical transmembrane segment at Arg-271–Leu-291 threads the bilayer. Over Arg-292–Leu-307 the chain is Cytoplasmic.

The protein belongs to the G-protein coupled receptor 1 family.

The protein resides in the cell membrane. Its function is as follows. Odorant receptor. This chain is Olfactory receptor 12D2 (OR12D2), found in Homo sapiens (Human).